Consider the following 85-residue polypeptide: RNA-binding protein Hfq (85 aa).

The Sm domain maps to 10–70; sequence DAFLNQVRKE…ISTIIPQRPV (61 aa).

The protein belongs to the Hfq family. In terms of assembly, homohexamer.

Its function is as follows. RNA chaperone that binds small regulatory RNA (sRNAs) and mRNAs to facilitate mRNA translational regulation in response to envelope stress, environmental stress and changes in metabolite concentrations. Also binds with high specificity to tRNAs. The chain is RNA-binding protein Hfq from Carboxydothermus hydrogenoformans (strain ATCC BAA-161 / DSM 6008 / Z-2901).